The sequence spans 219 residues: Ras-related protein Rab-3D (219 aa).

Ala-2 is subject to N-acetylalanine. Residue 29 to 37 participates in GDP binding; that stretch reads GNSSVGKTS. GTP contacts are provided by Ser-31, Ser-32, Val-33, Gly-34, Lys-35, Thr-36, Ser-37, Pro-49, and Ser-53. Thr-36 is a Mg(2+) binding site. Residues 49–58 carry the Switch 1 motif; sequence PAFVSTVGID. Positions 54 and 77 each coordinate Mg(2+). Gly-80 contacts GTP. The short motif at 80-96 is the Switch 2 element; the sequence is GQERYRTITTAYYRGAM. Thr-86 is subject to Phosphothreonine; by LRRK2. Residues Asn-135, Lys-136, Asp-138, Ala-166, and Lys-167 each contribute to the GTP site. GDP is bound by residues 135-138 and 165-167; these read NKCD and SAK. Ser-190 is subject to Phosphoserine. A disordered region spans residues 190 to 219; sequence SLEPSSSPGSNGKGPALGDTPPPQPSSCSC. The span at 193-203 shows a compositional bias: low complexity; it reads PSSSPGSNGKG. Positions 209–219 are enriched in pro residues; it reads TPPPQPSSCSC. S-geranylgeranyl cysteine attachment occurs at residues Cys-217 and Cys-219. A Cysteine methyl ester modification is found at Cys-219.

The protein belongs to the small GTPase superfamily. Rab family. As to quaternary structure, interacts with RIMS1, RIMS2, RPH3A, RPH3AL and RAB3IP. The GTP-bound form interacts with REP15. Interacts with CHM and CHML; phosphorylation at Thr-86 disrupts these interactions. Interacts with MADD (via uDENN domain); the GTP-bound form is preferred for interaction. Mg(2+) serves as cofactor. In terms of processing, phosphorylation of Thr-86 in the switch II region by LRRK2 prevents the association of RAB regulatory proteins, including CHM and CHML. As to expression, predominantly expressed in the adipocyte tissue, but is also expressed in several other organs including skin, spleen, heart and lung.

Its subcellular location is the cell membrane. The catalysed reaction is GTP + H2O = GDP + phosphate + H(+). Its activity is regulated as follows. Regulated by guanine nucleotide exchange factors (GEFs) which promote the exchange of bound GDP for free GTP. Regulated by GTPase activating proteins (GAPs) which increase the GTP hydrolysis activity. Inhibited by GDP dissociation inhibitors (GDIs) which prevent Rab-GDP dissociation. The small GTPases Rab are key regulators of intracellular membrane trafficking, from the formation of transport vesicles to their fusion with membranes. Rabs cycle between an inactive GDP-bound form and an active GTP-bound form that is able to recruit to membranes different sets of downstream effectors directly responsible for vesicle formation, movement, tethering and fusion. RAB3D may be involved in the insulin-induced exocytosis of GLUT4-containing vesicles in adipocytes. This is Ras-related protein Rab-3D from Mus musculus (Mouse).